The following is a 326-amino-acid chain: Neuferricin homolog (326 aa).

Positions 1–34 (MDKNRRRTDDAGLMTKTLAGIAALVFFLSFICSS) are cleaved as a signal peptide. One can recognise a Cytochrome b5 heme-binding domain in the interval 98–197 (KHVFTPEQLH…KEYPLVGVVA (100 aa)).

It belongs to the cytochrome b5 family. MAPR subfamily.

It localises to the secreted. Its function is as follows. Heme-binding protein. This chain is Neuferricin homolog (tag-131), found in Caenorhabditis elegans.